The primary structure comprises 290 residues: MAPSNLPPVFNATSQDIEMLLAAQCHLGSKNLQVHMEPYLWKTRPDGINVINIGKTWEKIVLAARIIAAIDNPADVAVISARPYGQRAVLKFASHTGATAIAGRFTPGNFTNYITRSFKEPRLIIVTDPRTDAQAIKEASYVNIPVIALCDTDSPTEFVDVAIPTNNKGRHAIGLVWWLLAREVLRLRGTLATRETEWDVVVDLYFYRDPEAEETKEIADESKVPGAEEVGPAAIETGYVGDSWDAAAPGAAAPGSAFAAASATAGATWEAEAGGDWAAESAQPNPETKW.

A compositionally biased stretch (low complexity) spans 263-282 (ATAGATWEAEAGGDWAAESA). Residues 263–290 (ATAGATWEAEAGGDWAAESAQPNPETKW) form a disordered region.

It belongs to the universal ribosomal protein uS2 family. As to quaternary structure, component of the small ribosomal subunit. Mature ribosomes consist of a small (40S) and a large (60S) subunit. The 40S subunit contains about 33 different proteins and 1 molecule of RNA (18S). The 60S subunit contains about 49 different proteins and 3 molecules of RNA (25S, 5.8S and 5S). Interacts with rps21.

It is found in the cytoplasm. Functionally, required for the assembly and/or stability of the 40S ribosomal subunit. Required for the processing of the 20S rRNA-precursor to mature 18S rRNA in a late step of the maturation of 40S ribosomal subunits. This chain is Small ribosomal subunit protein uS2 (rps0), found in Talaromyces stipitatus (strain ATCC 10500 / CBS 375.48 / QM 6759 / NRRL 1006) (Penicillium stipitatum).